The sequence spans 223 residues: Serine/threonine/tyrosine-interacting protein (223 aa).

Residues 28-176 form the Tyrosine-protein phosphatase domain; sequence EMQEILPGLF…LQEYEAIYLA (149 aa). The Interaction with FBXW7 signature appears at 76–78; it reads FQQ. Phosphoserine is present on residues Ser184, Ser193, and Ser201. A disordered region spans residues 197–223; that stretch reads GTTGSLKRTHEEEDDFGTMQVATAQNG.

This sequence belongs to the protein-tyrosine phosphatase family. Non-receptor class subfamily. In terms of assembly, interacts with MAPK1; independently of MAPK1 phosphorylation status. Interacts with CARHSP1/Crhsp-24. Interacts (via FQQ motif) with FBXW7 isoforms 1 (via F-box domain) and 3 (via F-box domain); the interaction is direct and prevents FBXW7 interaction with SKP1, a component of the SCF(FBXW7) complex. Does not interact with FBXW7 isoform 2.

Its subcellular location is the nucleus. The protein localises to the cytoplasm. The protein resides in the cytosol. Functionally, catalytically inactive phosphatase. Acts as a nuclear anchor for MAPK1/MAPK3 (ERK1/ERK2). Modulates cell-fate decisions and cell migration by spatiotemporal regulation of MAPK1/MAPK3 (ERK1/ERK2). By binding to the F-box of FBXW7, prevents the assembly of FBXW7 into the SCF E3 ubiquitin-protein ligase complex, and thereby inhibits degradation of its substrates. Plays a role in spermatogenesis. The polypeptide is Serine/threonine/tyrosine-interacting protein (Homo sapiens (Human)).